Here is a 973-residue protein sequence, read N- to C-terminus: Short transient receptor potential channel 5 (973 aa).

Residues 1–325 lie on the Cytoplasmic side of the membrane; the sequence is MAQLYYKKVN…YDGFPGWRRK (325 aa). 4 ANK repeats span residues 30-60, 69-97, 98-124, and 141-170; these read SAEE…IYYN, LGRS…VYVG, DALL…PSGE, and PDIT…TIPR. Zn(2+)-binding residues include His172, Cys176, Cys178, and Cys181. An intramembrane region (discontinuously helical) is located at residues 326 to 360; sequence HWVVKLLTCMTIGFLFPMLSIAYLISPRSNLGLFI. The Cytoplasmic portion of the chain corresponds to 361–363; that stretch reads KKP. Residues 364–384 traverse the membrane as a helical segment; sequence FIKFICHTASYLTFLFMLLLA. At 385–404 the chain is on the extracellular side; it reads SQHIVRTDLHVQGPPPTVVE. The chain crosses the membrane as a helical span at residues 405-419; that stretch reads WMILPWVLGFIWGEI. Ca(2+) contacts are provided by Glu418, Glu421, Asn436, and Asp439. The Cytoplasmic segment spans residues 420-433; the sequence is KEMWDGGFTEYIHD. A helical transmembrane segment spans residues 434–454; it reads WWNLMDFAMNSLYLATISLKI. Over 455-476 the chain is Extracellular; the sequence is VAYVKYNGSRPREEWEMWHPTL. A glycan (N-linked (GlcNAc...) asparagine) is linked at Asn461. A helical transmembrane segment spans residues 477-497; the sequence is IAEALFAISNILSSLRLISLF. Residues 498 to 512 are Cytoplasmic-facing; it reads TANSHLGPLQISLGR. A helical transmembrane segment spans residues 513 to 535; it reads MLLDILKFLFIYCLVLLAFANGL. The Extracellular portion of the chain corresponds to 536–603; it reads NQLYFYYETR…HEFTEFVGAT (68 aa). A disulfide bridge connects residues Cys553 and Cys558. Residues 604 to 624 traverse the membrane as a helical segment; the sequence is MFGTYNVISLVVLLNMLIAMM. At 625–973 the chain is on the cytoplasmic side; it reads NNSYQLIADH…GQEEQVTTRL (349 aa). 2 disordered regions span residues 766–794 and 810–837; these read HPRS…RAKS and GPPL…KRSF. The essential for binding to NHERF1 PDZ domain stretch occupies residues 971–973; it reads TRL.

Belongs to the transient receptor (TC 1.A.4) family. STrpC subfamily. TRPC5 sub-subfamily. Homotetramer. Heterotetramer with TRPC1 and/or TRPC4. Each subunit in the homomeric ion channel (via ANK repeats) interacts with one copy of GTP-bound GNAI3; the interaction is direct and activates the ion channel. Interacts with TRPC4AP. Interacts with NHERF1. Interacts with MX1 and RNF24. Interacts (via C-terminus) with CABP1. Interacts with SESTD1 (via the spectrin 1 repeat). Interacts with PLSCR1. Interacts with PKD2L2. Expressed in brain with higher levels in fetal brain. Found in cerebellum and occipital pole.

The protein localises to the cell membrane. The enzyme catalyses Ca(2+)(in) = Ca(2+)(out). With respect to regulation, activated by G-protein coupled receptors via direct interaction with GTP-bound GNAI3, which increases the channel sensitivity to phosphatidylinositol bisphosphate. May be activated by intracellular calcium store depletion. Calcium channel activity is enhanced by MYLK, that promotes its subcellular localization at the plasma membrane. In terms of biological role, forms a receptor-activated non-selective calcium permeant cation channel. Mediates calcium-dependent phosphatidylserine externalization and apoptosis in neurons via its association with PLSCR1. Acts on distinct neuronal populations in the hypothalamus to regulate innate behaviors including feeding, anxiety (flight/fight/fear), socialization, and maternal care. This chain is Short transient receptor potential channel 5 (TRPC5), found in Homo sapiens (Human).